A 497-amino-acid polypeptide reads, in one-letter code: Cytochrome P450 71A14 (497 aa).

Residues 3-23 (MIIISLCLATILALLLLKQFL) form a helical membrane-spanning segment. C440 contributes to the heme binding site.

The protein belongs to the cytochrome P450 family. The cofactor is heme.

It is found in the membrane. In Arabidopsis thaliana (Mouse-ear cress), this protein is Cytochrome P450 71A14 (CYP71A14).